The primary structure comprises 42 residues: uncharacterized protein (42 aa).

This is an uncharacterized protein from Escherichia coli (Bacteriophage T4).